The primary structure comprises 182 residues: Large ribosomal subunit protein uL6 (182 aa).

The protein belongs to the universal ribosomal protein uL6 family. In terms of assembly, part of the 50S ribosomal subunit.

This protein binds to the 23S rRNA, and is important in its secondary structure. It is located near the subunit interface in the base of the L7/L12 stalk, and near the tRNA binding site of the peptidyltransferase center. In Haloquadratum walsbyi (strain DSM 16790 / HBSQ001), this protein is Large ribosomal subunit protein uL6.